The following is a 200-amino-acid chain: N-(5'-phosphoribosyl)anthranilate isomerase (200 aa).

The protein belongs to the TrpF family.

The catalysed reaction is N-(5-phospho-beta-D-ribosyl)anthranilate = 1-(2-carboxyphenylamino)-1-deoxy-D-ribulose 5-phosphate. It participates in amino-acid biosynthesis; L-tryptophan biosynthesis; L-tryptophan from chorismate: step 3/5. The sequence is that of N-(5'-phosphoribosyl)anthranilate isomerase from Endomicrobium trichonymphae.